The primary structure comprises 141 residues: Hemoglobin subunit alpha (141 aa).

The Globin domain occupies 1–141; sequence VLSAADKAHV…VSTVLTSKYR (141 aa). Position 3 is a phosphoserine (Ser-3). N6-succinyllysine is present on residues Lys-7 and Lys-11. Position 16 is an N6-acetyllysine; alternate (Lys-16). At Lys-16 the chain carries N6-succinyllysine; alternate. A Phosphotyrosine modification is found at Tyr-24. A Phosphoserine modification is found at Ser-35. Position 40 is an N6-succinyllysine (Lys-40). Ser-49 bears the Phosphoserine mark. His-58 contacts O2. His-87 contacts heme b. Position 108 is a phosphothreonine (Thr-108). A Phosphoserine modification is found at Ser-124. Residues Thr-134 and Thr-137 each carry the phosphothreonine modification. Position 138 is a phosphoserine (Ser-138).

It belongs to the globin family. As to quaternary structure, heterotetramer of two alpha chains and two beta chains. Red blood cells.

Its function is as follows. Involved in oxygen transport from the lung to the various peripheral tissues. In terms of biological role, hemopressin acts as an antagonist peptide of the cannabinoid receptor CNR1. Hemopressin-binding efficiently blocks cannabinoid receptor CNR1 and subsequent signaling. The polypeptide is Hemoglobin subunit alpha (HBA) (Bradypus tridactylus (Pale-throated three-toed sloth)).